The sequence spans 142 residues: Biogenesis of lysosome-related organelles complex 1 subunit 2 (142 aa).

Residues 1-33 (MAAAAEGVLATRSDEPARDDAAVETAEEAKEPA) form a disordered region. Alanine 2 is subject to N-acetylalanine. The span at 12–33 (RSDEPARDDAAVETAEEAKEPA) shows a compositional bias: basic and acidic residues. The stretch at 79 to 127 (EMKDIAINISRNLKDLNQKYAGLQPYLDQINVIEEQVAALEQAAYKLDA) forms a coiled coil.

This sequence belongs to the BLOC1S2 family. In terms of assembly, component of the biogenesis of lysosome-related organelles complex 1 (BLOC-1) composed of BLOC1S1, BLOC1S2, BLOC1S3, BLOC1S4, BLOC1S5, BLOC1S6, DTNBP1/BLOC1S7 and SNAPIN/BLOC1S8. Octamer composed of one copy each BLOC1S1, BLOC1S2, BLOC1S3, BLOC1S4, BLOC1S5, BLOC1S6, DTNBP1/BLOC1S7 and SNAPIN/BLOC1S8. Interacts directly with BLOC1S1, BLOC1S3, BLOC1S4, BLOC1S5 and SNAPIN. The BLOC-1 complex associates with the AP-3 protein complex and membrane protein cargos. Component of the BLOC-one-related complex (BORC) which is composed of BLOC1S1, BLOC1S2, BORCS5, BORCS6, BORCS7, BORCS8, KXD1 and SNAPIN. Interacts with gamma-tubulin. Interacts with IFT57. In terms of tissue distribution, isoform 1 and isoform 2 are widely expressed. Expressed in various malignant tumor tissues (at protein level).

Its subcellular location is the cytoplasm. It localises to the cytoskeleton. The protein resides in the microtubule organizing center. The protein localises to the centrosome. It is found in the lysosome membrane. In terms of biological role, component of the BLOC-1 complex, a complex that is required for normal biogenesis of lysosome-related organelles (LRO), such as platelet dense granules and melanosomes. In concert with the AP-3 complex, the BLOC-1 complex is required to target membrane protein cargos into vesicles assembled at cell bodies for delivery into neurites and nerve terminals. The BLOC-1 complex, in association with SNARE proteins, is also proposed to be involved in neurite extension. As part of the BORC complex may play a role in lysosomes movement and localization at the cell periphery. Associated with the cytosolic face of lysosomes, the BORC complex may recruit ARL8B and couple lysosomes to microtubule plus-end-directed kinesin motor. May play a role in cell proliferation. This Homo sapiens (Human) protein is Biogenesis of lysosome-related organelles complex 1 subunit 2 (BLOC1S2).